We begin with the raw amino-acid sequence, 603 residues long: Complement factor I (603 aa).

Positions 1-18 (MKLAHLSLFLLALHLSSS) are cleaved as a signal peptide. Intrachain disulfides connect Cys-36-Cys-260, Cys-46-Cys-57, Cys-51-Cys-62, Cys-64-Cys-96, Cys-70-Cys-89, Cys-78-Cys-109, Cys-144-Cys-186, Cys-157-Cys-219, Cys-191-Cys-201, Cys-234-Cys-252, Cys-246-Cys-261, Cys-264-Cys-276, Cys-271-Cys-289, Cys-283-Cys-298, Cys-348-Cys-473, Cys-386-Cys-402, Cys-394-Cys-464, Cys-487-Cys-551, Cys-515-Cys-530, and Cys-541-Cys-570. A Kazal-like domain is found at 58-111 (IEGTCICKLPYQCPRAGTPVCAMNGRSYPTYCHQKSFECLHPEIKFSHNGTCAA). N-linked (GlcNAc...) asparagine glycans are attached at residues Asn-106, Asn-116, Asn-174, and Asn-182. The SRCR domain maps to 117–217 (VSLIYGRTKT…TELSNGLAGV (101 aa)). LDL-receptor class A domains are found at residues 218–262 (VCYK…LCCK) and 263–299 (GCRG…SRCE). Lys-244, Asn-247, Val-249, Asp-251, Asp-257, and Glu-258 together coordinate Ca(2+). Asn-267 carries an N-linked (GlcNAc...) asparagine glycan. Tyr-281, Asn-284, Glu-286, Asp-288, Asp-294, and Glu-295 together coordinate Ca(2+). The region spanning 361 to 594 (VIGGKPANVG…YFDWISYHVG (234 aa)) is the Peptidase S1 domain. Catalysis depends on charge relay system residues His-401 and Asp-449. A glycan (N-linked (GlcNAc...) asparagine) is linked at Asn-514. Ser-545 functions as the Charge relay system in the catalytic mechanism. An N-linked (GlcNAc...) asparagine glycan is attached at Asn-556.

Belongs to the peptidase S1 family. In terms of assembly, heterodimer of a light and heavy chains; disulfide-linked. The fully processed and mature protein circulates as a zymogen, and is allosterically activated by substrate-induced remodeling of the active site. Interacts with C3b. Interacts with complement factor H. As to expression, expressed in the liver by hepatocytes. Also present in other cells such as monocytes, fibroblasts or keratinocytes.

It is found in the secreted. It localises to the extracellular space. It carries out the reaction Inactivates complement subcomponents C3b, iC3b and C4b by proteolytic cleavage.. In terms of biological role, trypsin-like serine protease that plays an essential role in regulating the immune response by controlling all complement pathways. Inhibits these pathways by cleaving three peptide bonds in the alpha-chain of C3b and two bonds in the alpha-chain of C4b thereby inactivating these proteins. Essential cofactors for these reactions include factor H and C4BP in the fluid phase and membrane cofactor protein/CD46 and CR1 on cell surfaces. The presence of these cofactors on healthy cells allows degradation of deposited C3b by CFI in order to prevent undesired complement activation, while in apoptotic cells or microbes, the absence of such cofactors leads to C3b-mediated complement activation and subsequent opsonization. This is Complement factor I (Cfi) from Mus musculus (Mouse).